We begin with the raw amino-acid sequence, 675 residues long: Potassium-transporting ATPase ATP-binding subunit (675 aa).

The next 4 helical transmembrane spans lie at 34 to 54 (IMFV…FPDI), 65 to 85 (LITI…SEAF), 216 to 236 (IALF…IVTL), and 245 to 265 (LILP…TTIG). D304 serves as the catalytic 4-aspartylphosphate intermediate. Residues D341, E345, 372–379 (FTAETRMS), and K390 contribute to the ATP site. Residues D513 and D517 each coordinate Mg(2+). 3 helical membrane passes run 569–591 (ALTT…ALMM), 611–631 (AIIS…PIAM), and 644–664 (IFIN…FLGI).

It belongs to the cation transport ATPase (P-type) (TC 3.A.3) family. Type IA subfamily. As to quaternary structure, the system is composed of three essential subunits: KdpA, KdpB and KdpC.

The protein resides in the cell membrane. The catalysed reaction is K(+)(out) + ATP + H2O = K(+)(in) + ADP + phosphate + H(+). Its function is as follows. Part of the high-affinity ATP-driven potassium transport (or Kdp) system, which catalyzes the hydrolysis of ATP coupled with the electrogenic transport of potassium into the cytoplasm. This subunit is responsible for energy coupling to the transport system and for the release of the potassium ions to the cytoplasm. The protein is Potassium-transporting ATPase ATP-binding subunit of Staphylococcus aureus (strain Newman).